The sequence spans 216 residues: Large ribosomal subunit protein uL3 (216 aa).

The segment covering 133–145 has biased composition (polar residues); it reads GRATHGNSRSHNV. The interval 133–153 is disordered; sequence GRATHGNSRSHNVPGSIGMAQ. The residue at position 153 (Gln-153) is an N5-methylglutamine.

It belongs to the universal ribosomal protein uL3 family. Part of the 50S ribosomal subunit. Forms a cluster with proteins L14 and L19. Post-translationally, methylated by PrmB.

Its function is as follows. One of the primary rRNA binding proteins, it binds directly near the 3'-end of the 23S rRNA, where it nucleates assembly of the 50S subunit. This Burkholderia cenocepacia (strain ATCC BAA-245 / DSM 16553 / LMG 16656 / NCTC 13227 / J2315 / CF5610) (Burkholderia cepacia (strain J2315)) protein is Large ribosomal subunit protein uL3.